The primary structure comprises 542 residues: uncharacterized protein (542 aa).

The next 5 membrane-spanning stretches (helical) occupy residues 4–23 (ILRD…GYPL), 28–47 (IGGI…AFGA), 57–79 (IVYQ…HGFL), 86–108 (GVIY…LIPH), and 151–173 (PVVG…IYLA). 2 RCK C-terminal domains span residues 186–270 (RTLK…VIGC) and 273–356 (EVQA…LGDS). A run of 6 helical transmembrane segments spans residues 365–384 (IAVL…VPIP), 389–408 (ITVR…FLGA), 415–437 (LVWV…IFLA), 457–479 (WAIL…YVGY), 484–506 (IPMG…LGFA), and 519–541 (YAMV…IAVL).

It belongs to the AAE transporter (TC 2.A.81) family.

The protein resides in the cell membrane. This is an uncharacterized protein from Symbiobacterium thermophilum (strain DSM 24528 / JCM 14929 / IAM 14863 / T).